The primary structure comprises 205 residues: Thymidylate kinase (205 aa).

10 to 17 contributes to the ATP binding site; sequence GIDGAGKS.

The protein belongs to the thymidylate kinase family.

It carries out the reaction dTMP + ATP = dTDP + ADP. Phosphorylation of dTMP to form dTDP in both de novo and salvage pathways of dTTP synthesis. In Ralstonia pickettii (strain 12J), this protein is Thymidylate kinase.